A 181-amino-acid polypeptide reads, in one-letter code: Shikimate kinase (181 aa).

17–22 provides a ligand contact to ATP; it reads GVGKTT. Threonine 21 contributes to the Mg(2+) binding site. Residues aspartate 39, arginine 63, and glycine 85 each contribute to the substrate site. Arginine 122 provides a ligand contact to ATP. Arginine 141 contributes to the substrate binding site.

It belongs to the shikimate kinase family. As to quaternary structure, monomer. The cofactor is Mg(2+).

The protein resides in the cytoplasm. It carries out the reaction shikimate + ATP = 3-phosphoshikimate + ADP + H(+). The protein operates within metabolic intermediate biosynthesis; chorismate biosynthesis; chorismate from D-erythrose 4-phosphate and phosphoenolpyruvate: step 5/7. Functionally, catalyzes the specific phosphorylation of the 3-hydroxyl group of shikimic acid using ATP as a cosubstrate. This is Shikimate kinase from Nostoc punctiforme (strain ATCC 29133 / PCC 73102).